The primary structure comprises 305 residues: Syntaxin-112 (305 aa).

Met-1 carries the post-translational modification N-acetylmethionine. Residues 52–119 are a coiled coil; it reads QEIETIKTLI…TLIETLEKRN (68 aa). Positions 210–272 constitute a t-SNARE coiled-coil homology domain; that stretch reads DLKTKERHEA…SGGTNSLYYA (63 aa).

It belongs to the syntaxin family. In terms of assembly, part of the t-SNARE complex.

Vesicle trafficking protein that functions in the secretory pathway. This chain is Syntaxin-112 (SYP112), found in Arabidopsis thaliana (Mouse-ear cress).